Reading from the N-terminus, the 316-residue chain is Adenine deaminase (316 aa).

Positions 14, 16, and 194 each coordinate Zn(2+). The active-site Proton donor is the Glu-197. Asp-275 is a binding site for Zn(2+). Asp-276 provides a ligand contact to substrate.

Belongs to the metallo-dependent hydrolases superfamily. Adenosine and AMP deaminases family. Adenine deaminase type 2 subfamily. It depends on Zn(2+) as a cofactor.

The enzyme catalyses adenine + H2O + H(+) = hypoxanthine + NH4(+). Its function is as follows. Catalyzes the hydrolytic deamination of adenine to hypoxanthine. Plays an important role in the purine salvage pathway and in nitrogen catabolism. This chain is Adenine deaminase, found in Pseudomonas aeruginosa (strain UCBPP-PA14).